A 941-amino-acid chain; its full sequence is PHD finger protein 14 (941 aa).

A disordered region spans residues 22–295 (DYDSSDDSDF…LSQSKSNEDS (274 aa)). Phosphoserine is present on residues Ser26 and Ser29. A compositionally biased stretch (low complexity) spans 36–47 (ASDSEGSGNGSE). Acidic residues predominate over residues 60–72 (DSEENILEEELNE). Composition is skewed to basic and acidic residues over residues 74–85 (IQVKEEQLKNST), 94–109 (QLIK…NGER), and 116–132 (KEKE…EKAT). The residue at position 84 (Ser84) is a Phosphoserine. Low complexity predominate over residues 133-166 (VSDSAAASAAGTTPATSPPAVTSPSVPTTTTTTT). Residue Ser189 is modified to Phosphoserine. Composition is skewed to acidic residues over residues 194-205 (NAMDDYDSEDDN) and 226-249 (DGDN…EGND). Tyr199 carries the post-translational modification Phosphotyrosine. Ser201 is modified (phosphoserine). Thr280 is subject to Phosphothreonine. Residues 281 to 290 (NDSLTLSQSK) are compositionally biased toward polar residues. 5 positions are modified to phosphoserine: Ser283, Ser287, Ser291, Ser295, and Ser301. The PHD-type 1 zinc finger occupies 312–373 (ILICCVCLGD…PWFCDACKCG (62 aa)). Residues Cys315, Cys318, Cys332, Cys335, His340, and Cys343 each contribute to the Zn(2+) site. Ser352 carries the post-translational modification Phosphoserine. 14 residues coordinate Zn(2+): Cys367, Cys370, Cys378, Cys381, His398, Cys401, Cys434, Cys437, Cys451, Cys456, His461, Cys464, Cys488, and His491. Residues 375–408 (SPSCELCPNQDGIFKETDAGRWVHIVCALYVPGV) form a C2HC pre-PHD-type zinc finger. A PHD-type 2 zinc finger spans residues 432-492 (KECSFCEDPR…PFFAYCKQHA (61 aa)). Ser523 carries the post-translational modification Phosphoserine. Residues 623–671 (MIQIQENMAEQKNIKDKLENEQEKLHVEYNKLCESLEELQNLNGKLRSE) adopt a coiled-coil conformation. The PHD-type 3 zinc finger occupies 718-772 (LYSCGICKKNHDQHLLLLCDTCKLHYHLGCLDPPLTRMPRKTKNSYWQCSECDQA). The Zn(2+) site is built by Cys721, Cys724, Cys736, Cys739, His744, Cys747, Cys766, and Cys769. Ser774, Ser775, and Ser828 each carry phosphoserine. The segment at 804-855 (VPQDVPPEPKKIPIRNTRTRGRKRSFVPEEEKHEERVPRERRQRQSVLQKKP) is disordered. Positions 829 to 843 (FVPEEEKHEERVPRE) are enriched in basic and acidic residues. The PHD-type 4 zinc-finger motif lies at 861–914 (RTECSTCKGTGDNENLVRCDECRLCYHFGCLDPPLKKSPKQTGYGWICQECDSS). 8 residues coordinate Zn(2+): Cys864, Cys867, Cys879, Cys882, His887, Cys890, Cys908, and Cys911. The tract at residues 912–941 (DSSSSKEDENEAEKKNASQELSMEQKTPKK) is disordered. The span at 915 to 928 (SSKEDENEAEKKNA) shows a compositional bias: basic and acidic residues. Polar residues predominate over residues 930–941 (QELSMEQKTPKK).

In terms of tissue distribution, high levels detected in testis, lung and spleen and low levels in muscle, heart, intestine and kidney (at protein level). Widely expressed in adult with increased levels in intestine, colon and lung.

The protein localises to the nucleus. It localises to the chromosome. It is found in the cytoplasm. Functionally, histone-binding protein. Binds preferentially to unmodified histone H3 but can also bind to a lesser extent to histone H3 trimethylated at 'Lys-9' (H3K9me3) as well as to histone H3 monomethylated at 'Lys-27' (H3K27ac) and trimethylated at 'Lys-27' (H3K27me3). Represses PDGFRA expression, thus playing a role in regulation of mesenchymal cell proliferation. Suppresses the expression of CDKN1A/p21 by reducing the level of trimethylation of histone H3 'Lys-4', leading to enhanced proliferation of germinal center B cells. The chain is PHD finger protein 14 (Phf14) from Mus musculus (Mouse).